Consider the following 258-residue polypeptide: Transcription factor RSL3 (258 aa).

The short motif at 98–105 (RKLLDVEN) is the D-box element. The disordered stretch occupies residues 119–178 (ELAKSKKKQRVSSESNTVDESNTNWVDGQSLSNSSDDEKASVTSVKGKTRATKGTATDPQ). Residues 130-152 (SSESNTVDESNTNWVDGQSLSNS) are compositionally biased toward polar residues. Residues 173–186 (TATDPQSLYARKRR) form a basic motif region. Residues 173–222 (TATDPQSLYARKRREKINERLKTLQNLVPNGTKVDISTMLEEAVHYVKFL) enclose the bHLH domain. The tract at residues 187–222 (EKINERLKTLQNLVPNGTKVDISTMLEEAVHYVKFL) is helix-loop-helix motif.

In terms of assembly, homodimer. Post-translationally, ubiquitinated. Ubiquitination leads to its subsequent degradation by the 26S proteasome. Expressed constitutively in roots, leaves, and flowers. Expressed in root epidermal hair cells.

The protein resides in the nucleus. In terms of biological role, transcription factor involved in the regulation of root hair elongation. Is sufficient to promote postmitotic cell growth in root-hair cells and is a direct transcriptional target of RHD6 and RSL1. Involved in the regulation of root hair elongation in response to low phosphate. Controls root hair cell growth by regulating the expression of genes encoding proteins involved in cell signaling, cell wall modification and secretion. The polypeptide is Transcription factor RSL3 (Arabidopsis thaliana (Mouse-ear cress)).